We begin with the raw amino-acid sequence, 455 residues long: Probable glycine dehydrogenase (decarboxylating) subunit 1 (455 aa).

This sequence belongs to the GcvP family. N-terminal subunit subfamily. The glycine cleavage system is composed of four proteins: P, T, L and H. In this organism, the P 'protein' is a heterodimer of two subunits.

The catalysed reaction is N(6)-[(R)-lipoyl]-L-lysyl-[glycine-cleavage complex H protein] + glycine + H(+) = N(6)-[(R)-S(8)-aminomethyldihydrolipoyl]-L-lysyl-[glycine-cleavage complex H protein] + CO2. The glycine cleavage system catalyzes the degradation of glycine. The P protein binds the alpha-amino group of glycine through its pyridoxal phosphate cofactor; CO(2) is released and the remaining methylamine moiety is then transferred to the lipoamide cofactor of the H protein. The chain is Probable glycine dehydrogenase (decarboxylating) subunit 1 from Francisella tularensis subsp. mediasiatica (strain FSC147).